A 155-amino-acid chain; its full sequence is Small ribosomal subunit protein uS7c (155 aa).

This sequence belongs to the universal ribosomal protein uS7 family. As to quaternary structure, part of the 30S ribosomal subunit.

Its subcellular location is the plastid. It localises to the chloroplast. Its function is as follows. One of the primary rRNA binding proteins, it binds directly to 16S rRNA where it nucleates assembly of the head domain of the 30S subunit. In Physcomitrium patens (Spreading-leaved earth moss), this protein is Small ribosomal subunit protein uS7c (rps7).